Consider the following 555-residue polypeptide: Glucosylglycerate phosphorylase (555 aa).

Residue aspartate 231 is the Nucleophile of the active site.

This sequence belongs to the glycosyl hydrolase 13 family. Glucosylglycerate phosphorylase subfamily.

The catalysed reaction is (2R)-2-O-(alpha-D-glucopyranosyl)-glycerate + phosphate = (R)-glycerate + alpha-D-glucose 1-phosphate. Catalyzes the reversible phosphorolysis of glucosylglycerate into alpha-D-glucose 1-phosphate (Glc1P) and D-glycerate. May be a regulator of intracellular levels of glucosylglycerate, a compatible solute that primarily protects organisms facing salt stress and very specific nutritional constraints. Has a very strict substrate specificity. Cannot catalyze the phosphorolysis of sucrose or synthesize sucrose from Glc1P and D-fructose. The chain is Glucosylglycerate phosphorylase from Allomeiothermus silvanus (strain ATCC 700542 / DSM 9946 / NBRC 106475 / NCIMB 13440 / VI-R2) (Thermus silvanus).